The following is a 108-amino-acid chain: Large ribosomal subunit protein uL23 (108 aa).

This sequence belongs to the universal ribosomal protein uL23 family. As to quaternary structure, part of the 50S ribosomal subunit. Contacts protein L29, and trigger factor when it is bound to the ribosome.

Its function is as follows. One of the early assembly proteins it binds 23S rRNA. One of the proteins that surrounds the polypeptide exit tunnel on the outside of the ribosome. Forms the main docking site for trigger factor binding to the ribosome. This is Large ribosomal subunit protein uL23 from Polaromonas sp. (strain JS666 / ATCC BAA-500).